Consider the following 146-residue polypeptide: Large ribosomal subunit protein uL15 (146 aa).

The tract at residues 1–59 is disordered; sequence MRLEELKAPAGANKRTKRVGRGTGSGHGKTSTRGHKGQKSRSGGGVRPGFEGGQMPLQR. The segment covering 30-39 has biased composition (basic residues); it reads TSTRGHKGQK. Gly residues predominate over residues 42–52; it reads SGGGVRPGFEG.

Belongs to the universal ribosomal protein uL15 family. Part of the 50S ribosomal subunit.

In terms of biological role, binds to the 23S rRNA. The chain is Large ribosomal subunit protein uL15 from Syntrophomonas wolfei subsp. wolfei (strain DSM 2245B / Goettingen).